We begin with the raw amino-acid sequence, 1045 residues long: Bifunctional glutamine synthetase adenylyltransferase/adenylyl-removing enzyme (1045 aa).

Residues 1 to 527 (MSGPLRSERK…LHSQLFYRPL (527 aa)) are adenylyl removase. The tract at residues 533–1045 (NLSADAIRLS…GVDSMEQREF (513 aa)) is adenylyl transferase.

This sequence belongs to the GlnE family. Mg(2+) is required as a cofactor.

It catalyses the reaction [glutamine synthetase]-O(4)-(5'-adenylyl)-L-tyrosine + phosphate = [glutamine synthetase]-L-tyrosine + ADP. The enzyme catalyses [glutamine synthetase]-L-tyrosine + ATP = [glutamine synthetase]-O(4)-(5'-adenylyl)-L-tyrosine + diphosphate. Involved in the regulation of glutamine synthetase GlnA, a key enzyme in the process to assimilate ammonia. When cellular nitrogen levels are high, the C-terminal adenylyl transferase (AT) inactivates GlnA by covalent transfer of an adenylyl group from ATP to specific tyrosine residue of GlnA, thus reducing its activity. Conversely, when nitrogen levels are low, the N-terminal adenylyl removase (AR) activates GlnA by removing the adenylyl group by phosphorolysis, increasing its activity. The regulatory region of GlnE binds the signal transduction protein PII (GlnB) which indicates the nitrogen status of the cell. The chain is Bifunctional glutamine synthetase adenylyltransferase/adenylyl-removing enzyme from Corynebacterium glutamicum (strain ATCC 13032 / DSM 20300 / JCM 1318 / BCRC 11384 / CCUG 27702 / LMG 3730 / NBRC 12168 / NCIMB 10025 / NRRL B-2784 / 534).